The sequence spans 101 residues: Movement protein (101 aa).

A helical transmembrane segment spans residues 30-50 (EVAILSFVALICIYLLYLWVL). The disordered stretch occupies residues 80-101 (PIPNTLEPTAPVHPGPFVPGQG). Residues 90–101 (PVHPGPFVPGQG) show a composition bias toward pro residues.

The protein belongs to the mastrevirus movement protein family. As to quaternary structure, interacts with the capsid protein (CP). Part of a MP-CP-viral DNA complex.

Its subcellular location is the host membrane. Its function is as follows. Involved in the viral transport within, and between cells. The sequence is that of Movement protein from Avena sativa (Oat).